The chain runs to 546 residues: Apolipoprotein N-acyltransferase 1 (546 aa).

7 consecutive transmembrane segments (helical) span residues 14-34, 41-61, 62-82, 85-105, 122-142, 151-171, and 194-214; these read FLLF…PLLP, AYGA…FAVV, FWGG…LFVF, VALC…CLAL, LVWL…PYGV, LPLI…LVVF, and FLSA…LCGF. One can recognise a CN hydrolase domain in the interval 233 to 502; that stretch reads AKVALVQPNG…PGVLVADVPI (270 aa). The Proton acceptor role is filled by E280. The active site involves K361. C413 acts as the Nucleophile in catalysis. Residues 514–534 form a helical membrane-spanning segment; sequence GDALGVFFCVASLFILIAGGV.

The protein belongs to the CN hydrolase family. Apolipoprotein N-acyltransferase subfamily.

It is found in the cell inner membrane. It catalyses the reaction N-terminal S-1,2-diacyl-sn-glyceryl-L-cysteinyl-[lipoprotein] + a glycerophospholipid = N-acyl-S-1,2-diacyl-sn-glyceryl-L-cysteinyl-[lipoprotein] + a 2-acyl-sn-glycero-3-phospholipid + H(+). It participates in protein modification; lipoprotein biosynthesis (N-acyl transfer). Its function is as follows. Catalyzes the phospholipid dependent N-acylation of the N-terminal cysteine of apolipoprotein, the last step in lipoprotein maturation. The polypeptide is Apolipoprotein N-acyltransferase 1 (Treponema pallidum (strain Nichols)).